The following is a 491-amino-acid chain: Cytochrome P450 monooxygenase 521A1 (491 aa).

The chain crosses the membrane as a helical span at residues 1–21 (MILLTLLYLIIFYIIIDFIKK). Position 438 (cysteine 438) interacts with heme.

It belongs to the cytochrome P450 family. The cofactor is heme.

It is found in the membrane. The catalysed reaction is discoidol + reduced [NADPH--hemoprotein reductase] + O2 = discodiene + acetone + oxidized [NADPH--hemoprotein reductase] + 2 H2O + H(+). The protein operates within sesquiterpene biosynthesis. Its function is as follows. Cytochrome P450 monooxygenase; part of the gene cluster that mediates the biosynthesis of the trisnorsesquiterpene discodiene which has a function during later stages of multicellular development, during the transition from fingers to Mexican hats. The terpene synthase tps8 converts its substrate farnesyl diphosphate (FDP) into the bicyclic sesquiterpene alcohol discoidol. The cytochrome P450 monooxygenase cyp521A1 then catalyzes the oxidative degradation of discoidol to form the trisnorsesquiterpene discodiene. This is Cytochrome P450 monooxygenase 521A1 (cyp521A1) from Dictyostelium discoideum (Social amoeba).